We begin with the raw amino-acid sequence, 475 residues long: Flotillin-like protein 4 (475 aa).

2 coiled-coil regions span residues Glu235–Ala255 and Gln305–Glu325.

It belongs to the band 7/mec-2 family. Flotillin subfamily. In terms of tissue distribution, expressed in roots and nodules. Primarily expressed in vascular tissues. Upon induction of nodulation, expansion of expression in the root cortex in the region of elongating root hairs, which will eventually become colonized by bacteria. Expressed in the infection zone in nodules.

The protein localises to the membrane. It is found in the caveola. The protein resides in the cell membrane. In terms of biological role, may act as a scaffolding protein within caveolar membranes, functionally participating in formation of caveolae or caveolae-like vesicles. Required for normal infection threads initiation and elongation and nodulation. Probably involved in polar growth of the infection thread. In Medicago truncatula (Barrel medic), this protein is Flotillin-like protein 4 (FLOT4).